Reading from the N-terminus, the 490-residue chain is RNA-binding protein P (490 aa).

A disordered region spans residues 1 to 112 (MGKKRKLDSK…EEEEAAERDA (112 aa)). The segment covering 13–36 (AAARSAAARAAAAAAAAAAAAAVA) has biased composition (low complexity). Positions 74–108 (GGEEEEVEEVEVEEEVEVDEDEDGEGEGEEEEEAA) are enriched in acidic residues. RRM domains are found at residues 156–233 (RKIF…LASV) and 267–343 (RKIF…QKAI).

As to quaternary structure, forms homodimers. Interacts with RBP-L and RBP-208. Interacts with NSF.

Its subcellular location is the nucleus. The protein localises to the cytoplasm. Its function is as follows. RNA-binding protein that binds to a cis-localization element or zipcode, within the 5'-CDS of prolamine RNA. Binds strongly to glutelin mRNA, particularly to 3'-UTR and zipcode RNA. Recognizes and binds to glutelin zipcode RNA, which is required for proper mRNA localization to cisternal endoplasmic reticulum. Exhibits strong binding activity to a glutelin intron sequence and may participate in mRNA splicing. Required for the correct localization of glutelin and prolamine mRNA in endosperm cells during grain development. RBP-P and RBP-L form a quaternary complex with the membrane trafficking factors NSF and RAB5A. This quaternay complex carries glutelin mRNAs for active transport on endosomes to the cortical endoplasmic reticulum membrane, and enables endosome-mediated glutelin mRNA transport in endosperm cells. The polypeptide is RNA-binding protein P (Oryza sativa subsp. japonica (Rice)).